We begin with the raw amino-acid sequence, 122 residues long: Small ribosomal subunit protein uS13 (122 aa).

Residues 98 to 122 (VRGQRTHTNARTRKGPAKAIAGKKK) are disordered.

The protein belongs to the universal ribosomal protein uS13 family. As to quaternary structure, part of the 30S ribosomal subunit. Forms a loose heterodimer with protein S19. Forms two bridges to the 50S subunit in the 70S ribosome.

Its function is as follows. Located at the top of the head of the 30S subunit, it contacts several helices of the 16S rRNA. In the 70S ribosome it contacts the 23S rRNA (bridge B1a) and protein L5 of the 50S subunit (bridge B1b), connecting the 2 subunits; these bridges are implicated in subunit movement. Contacts the tRNAs in the A and P-sites. This Ruegeria sp. (strain TM1040) (Silicibacter sp.) protein is Small ribosomal subunit protein uS13.